Consider the following 357-residue polypeptide: Large ribosomal subunit protein mL45 (357 aa).

The interval 333-357 (EAKALPLRTTEKLEEAKKEKEQQEI) is disordered. Positions 341 to 357 (TTEKLEEAKKEKEQQEI) are enriched in basic and acidic residues.

It belongs to the mitochondrion-specific ribosomal protein mL45 family.

Its subcellular location is the mitochondrion. This is Large ribosomal subunit protein mL45 (mrpl-45) from Caenorhabditis elegans.